Consider the following 131-residue polypeptide: Snaclec A13 (131 aa).

3 disulfide bridges follow: cysteine 4-cysteine 15, cysteine 32-cysteine 125, and cysteine 100-cysteine 117. Residues 11-126 (YEGHCYKVFN…CELAYHFICM (116 aa)) enclose the C-type lectin domain.

The protein belongs to the snaclec family. In terms of assembly, heterodimer; disulfide-linked. In terms of tissue distribution, expressed by the venom gland.

The protein localises to the secreted. In terms of biological role, interferes with one step of hemostasis (modulation of platelet aggregation, or coagulation cascade, for example). This chain is Snaclec A13, found in Macrovipera lebetinus (Levantine viper).